Reading from the N-terminus, the 731-residue chain is MSRTDQLAGTHLAPEPNDLALLVAGSHHNPHGVLGAHEYGDHIVIRAFRPHAAEVIAIVGDDRFPMQHIESGLFAVALPFVDLIDYRLQVSYENSEPFTVADAYRFLPTLGEVDLHLFAEGRHERLWEALGAHPRSFTTADGVVHGVSFAVWAPNAEGVSLIGDFNGWSGSEAPMRVLGSSGVWELFWPDFPADGLYKFRVHGADGVVSERADPFAFGTEVPPQTASRVTVSDYSWGDGDWMTERAQRNPVFEPMSTYEVHLGSWRPGLSYRQLATELTDYVVAHKFTHVELLPVAEHPFAGSWGYQVTSYYAPTSRFGTPDDFRALVDALHQAGIGVIVDWVPAHFPKDAWALGRFDGTPLYEHSDPKRGEQLDWGTYVFDFGRPEVRNFLVANALYWIEQFHIDGLRVDAVASMLYLDYSRPQDGWTPNIYEGRENLEAVQFLQEMNATAHKAAPGIVTIAEESTSWPGVTRPTSIGGLGFSMKWNMGWMHDTLDYVSRDPIYRSYHHHEMTFSMLYAFSENYVLPLSHDEVVHGKGTLWGRMPGSNHTKAAGLRSLLAYQWAHPGKQLLFMGQEFGQRAEWSEQRGLDWFQLDENGFSNGVLRLVRDINEIYCDHCALWSQDTTPEGYSWIDANDSANNVLSFLRHGSDGSVMACIFNFAGSEHSDYRLGLPIAGRWREVLNTDATIYNGSGVGNFGGVDATAEPWHGRPASAVLVLPPSSALWLEPA.

The Nucleophile role is filled by aspartate 411. Residue glutamate 464 is the Proton donor of the active site.

Belongs to the glycosyl hydrolase 13 family. GlgB subfamily. In terms of assembly, monomer.

The catalysed reaction is Transfers a segment of a (1-&gt;4)-alpha-D-glucan chain to a primary hydroxy group in a similar glucan chain.. The protein operates within glycan biosynthesis; glycogen biosynthesis. Functionally, catalyzes the formation of the alpha-1,6-glucosidic linkages in glycogen by scission of a 1,4-alpha-linked oligosaccharide from growing alpha-1,4-glucan chains and the subsequent attachment of the oligosaccharide to the alpha-1,6 position. The protein is 1,4-alpha-glucan branching enzyme GlgB of Mycobacterium ulcerans (strain Agy99).